The following is a 225-amino-acid chain: NAD(P)H-quinone oxidoreductase subunit K, chloroplastic (225 aa).

[4Fe-4S] cluster-binding residues include C43, C44, C108, and C139.

The protein belongs to the complex I 20 kDa subunit family. NDH is composed of at least 16 different subunits, 5 of which are encoded in the nucleus. Requires [4Fe-4S] cluster as cofactor.

The protein resides in the plastid. The protein localises to the chloroplast thylakoid membrane. The catalysed reaction is a plastoquinone + NADH + (n+1) H(+)(in) = a plastoquinol + NAD(+) + n H(+)(out). It catalyses the reaction a plastoquinone + NADPH + (n+1) H(+)(in) = a plastoquinol + NADP(+) + n H(+)(out). In terms of biological role, NDH shuttles electrons from NAD(P)H:plastoquinone, via FMN and iron-sulfur (Fe-S) centers, to quinones in the photosynthetic chain and possibly in a chloroplast respiratory chain. The immediate electron acceptor for the enzyme in this species is believed to be plastoquinone. Couples the redox reaction to proton translocation, and thus conserves the redox energy in a proton gradient. The sequence is that of NAD(P)H-quinone oxidoreductase subunit K, chloroplastic from Nandina domestica (Heavenly bamboo).